The chain runs to 156 residues: Small ribosomal subunit protein uS7 (156 aa).

This sequence belongs to the universal ribosomal protein uS7 family. In terms of assembly, part of the 30S ribosomal subunit. Contacts proteins S9 and S11.

In terms of biological role, one of the primary rRNA binding proteins, it binds directly to 16S rRNA where it nucleates assembly of the head domain of the 30S subunit. Is located at the subunit interface close to the decoding center, probably blocks exit of the E-site tRNA. The protein is Small ribosomal subunit protein uS7 of Cellvibrio japonicus (strain Ueda107) (Pseudomonas fluorescens subsp. cellulosa).